The chain runs to 136 residues: ATP synthase epsilon chain (136 aa).

Belongs to the ATPase epsilon chain family. As to quaternary structure, F-type ATPases have 2 components, CF(1) - the catalytic core - and CF(0) - the membrane proton channel. CF(1) has five subunits: alpha(3), beta(3), gamma(1), delta(1), epsilon(1). CF(0) has three main subunits: a, b and c.

Its subcellular location is the cell inner membrane. In terms of biological role, produces ATP from ADP in the presence of a proton gradient across the membrane. This chain is ATP synthase epsilon chain, found in Afipia carboxidovorans (strain ATCC 49405 / DSM 1227 / KCTC 32145 / OM5) (Oligotropha carboxidovorans).